The sequence spans 243 residues: Ribonuclease HII (243 aa).

In terms of domain architecture, RNase H type-2 spans 23-217 (SVIVGVDEVG…LSSECEGAPP (195 aa)). Positions 29, 30, and 122 each coordinate a divalent metal cation. The disordered stretch occupies residues 223-243 (LSSTGIKTPVDGRGDAVATRD). The segment covering 232–243 (VDGRGDAVATRD) has biased composition (basic and acidic residues).

This sequence belongs to the RNase HII family. Requires Mn(2+) as cofactor. It depends on Mg(2+) as a cofactor.

The protein localises to the cytoplasm. It carries out the reaction Endonucleolytic cleavage to 5'-phosphomonoester.. Endonuclease that specifically degrades the RNA of RNA-DNA hybrids. This Anaplasma marginale (strain St. Maries) protein is Ribonuclease HII.